We begin with the raw amino-acid sequence, 273 residues long: Imidazole glycerol phosphate synthase subunit HisF (273 aa).

Active-site residues include aspartate 12 and aspartate 136.

This sequence belongs to the HisA/HisF family. As to quaternary structure, heterodimer of HisH and HisF.

The protein localises to the cytoplasm. It catalyses the reaction 5-[(5-phospho-1-deoxy-D-ribulos-1-ylimino)methylamino]-1-(5-phospho-beta-D-ribosyl)imidazole-4-carboxamide + L-glutamine = D-erythro-1-(imidazol-4-yl)glycerol 3-phosphate + 5-amino-1-(5-phospho-beta-D-ribosyl)imidazole-4-carboxamide + L-glutamate + H(+). Its pathway is amino-acid biosynthesis; L-histidine biosynthesis; L-histidine from 5-phospho-alpha-D-ribose 1-diphosphate: step 5/9. Functionally, IGPS catalyzes the conversion of PRFAR and glutamine to IGP, AICAR and glutamate. The HisF subunit catalyzes the cyclization activity that produces IGP and AICAR from PRFAR using the ammonia provided by the HisH subunit. This Halobacterium salinarum (strain ATCC 29341 / DSM 671 / R1) protein is Imidazole glycerol phosphate synthase subunit HisF.